A 257-amino-acid chain; its full sequence is Probable enoyl-CoA hydratase echA8 (257 aa).

It belongs to the enoyl-CoA hydratase/isomerase family.

The enzyme catalyses a (3S)-3-hydroxyacyl-CoA = a (2E)-enoyl-CoA + H2O. It catalyses the reaction a 4-saturated-(3S)-3-hydroxyacyl-CoA = a (3E)-enoyl-CoA + H2O. Its function is as follows. Could possibly oxidize fatty acids using specific components. The protein is Probable enoyl-CoA hydratase echA8 (echA8) of Mycobacterium tuberculosis (strain CDC 1551 / Oshkosh).